The chain runs to 370 residues: Coiled-coil domain-containing protein 89 (370 aa).

A disordered region spans residues 1–21 (MPQEEKTLRMDTPPPDEILGK). Thr12 carries the phosphothreonine modification. Positions 36–346 (KEMDGLREAL…YDELRLQSEA (311 aa)) form a coiled coil.

Belongs to the CCDC89 family. In terms of assembly, interacts with HEY1. As to expression, expression is restricted to the adult testis, where localization is almost exclusive to round spermatids.

Its subcellular location is the cytoplasm. The protein localises to the nucleus. This chain is Coiled-coil domain-containing protein 89, found in Mus musculus (Mouse).